We begin with the raw amino-acid sequence, 393 residues long: MTMLAAKADPMTLSMGPHHPSMHGVLRLIVTLDGENVTDCEPILGYLHRGMEKIAENRTIVQYLPYVTRWDYLATMFTEAITVNAPEKLTNIQVPKRASYIRIIMLELSRIASHLLWLGPFMADIGAQTPFFYILREREMIYDLFEAATGMRMMHNFFRIGGVAVDLPYGWVDKCLDFCDYFSLKVDEYERLITYNSIFLKRVEGVGTISREEAINWGLSGLMLRASGVQWDLRKVDHYECYDELDWQVQSQTEGDSLARYLVRIGEMRESVKIIQQALKVIPGGPYENLEARRLNQGKDSEWNDFEYQFISKKPSPTFKLPKQEHYIRVEAPKGELGIYLIGDDSVFPWRWKIRPPGFINLQILPQLVKGMKLADIMTILGSIDIIMGEVDR.

It belongs to the complex I 49 kDa subunit family. As to quaternary structure, NDH is composed of at least 16 different subunits, 5 of which are encoded in the nucleus.

Its subcellular location is the plastid. The protein resides in the chloroplast thylakoid membrane. The enzyme catalyses a plastoquinone + NADH + (n+1) H(+)(in) = a plastoquinol + NAD(+) + n H(+)(out). It catalyses the reaction a plastoquinone + NADPH + (n+1) H(+)(in) = a plastoquinol + NADP(+) + n H(+)(out). Its function is as follows. NDH shuttles electrons from NAD(P)H:plastoquinone, via FMN and iron-sulfur (Fe-S) centers, to quinones in the photosynthetic chain and possibly in a chloroplast respiratory chain. The immediate electron acceptor for the enzyme in this species is believed to be plastoquinone. Couples the redox reaction to proton translocation, and thus conserves the redox energy in a proton gradient. The chain is NAD(P)H-quinone oxidoreductase subunit H, chloroplastic from Anthoceros angustus (Hornwort).